A 155-amino-acid chain; its full sequence is SsrA-binding protein (155 aa).

The protein belongs to the SmpB family.

Its subcellular location is the cytoplasm. Functionally, required for rescue of stalled ribosomes mediated by trans-translation. Binds to transfer-messenger RNA (tmRNA), required for stable association of tmRNA with ribosomes. tmRNA and SmpB together mimic tRNA shape, replacing the anticodon stem-loop with SmpB. tmRNA is encoded by the ssrA gene; the 2 termini fold to resemble tRNA(Ala) and it encodes a 'tag peptide', a short internal open reading frame. During trans-translation Ala-aminoacylated tmRNA acts like a tRNA, entering the A-site of stalled ribosomes, displacing the stalled mRNA. The ribosome then switches to translate the ORF on the tmRNA; the nascent peptide is terminated with the 'tag peptide' encoded by the tmRNA and targeted for degradation. The ribosome is freed to recommence translation, which seems to be the essential function of trans-translation. This is SsrA-binding protein from Streptococcus pneumoniae serotype 4 (strain ATCC BAA-334 / TIGR4).